A 634-amino-acid polypeptide reads, in one-letter code: Growth hormone receptor (634 aa).

The N-terminal stretch at 1–18 (MDLWQLLLTLAVAGSSDA) is a signal peptide. Over 19-260 (FSGSEATPAF…NPSACEEDFQ (242 aa)) the chain is Extracellular. Asparagine 46 is a glycosylation site (N-linked (GlcNAc...) asparagine). A disulfide bridge links cysteine 56 with cysteine 66. A glycan (N-linked (GlcNAc...) asparagine) is linked at asparagine 73. Cysteines 97 and 108 form a disulfide. N-linked (GlcNAc...) asparagine glycosylation is present at asparagine 111. Residues cysteine 122 and cysteine 136 are joined by a disulfide bond. A Fibronectin type-III domain is found at 147 to 250 (PPVGLNWTLL…EVLLITFPQM (104 aa)). Residues asparagine 152, asparagine 157, and asparagine 196 are each glycosylated (N-linked (GlcNAc...) asparagine). A WSXWS motif motif is present at residues 236-240 (YGKFS). A helical transmembrane segment spans residues 261–284 (FPWFLIIMFGILGLAVTLFLLIFS). Over 285–634 (KQQRIKMLIL…STDQLNKIMP (350 aa)) the chain is Cytoplasmic. A required for JAK2 binding region spans residues 290–375 (KMLILPPVPV…HEKSLNIFGA (86 aa)). The Box 1 motif signature appears at 293–301 (ILPPVPVPK). Positions 336-345 (DSWVEFIELD) match the UbE motif motif. Serine 337 is modified (phosphoserine). A phosphotyrosine mark is found at tyrosine 483 and tyrosine 591.

The protein belongs to the type I cytokine receptor family. Type 1 subfamily. On growth hormone (GH) binding, forms homodimers and binds JAK2 via a box 1-containing domain. Post-translationally, the soluble form (GHBP) is produced by phorbol ester-promoted proteolytic cleavage at the cell surface (shedding) by ADAM17/TACE. Shedding is inhibited by growth hormone (GH) binding to the receptor probably due to a conformational change in GHR rendering the receptor inaccessible to ADAM17. On GH binding, phosphorylated on tyrosine residues in the cytoplasmic domain by JAK2. In terms of processing, ubiquitinated by the ECS(SOCS2) complex following ligand-binding and phosphorylation by JAK2, leading to its degradation by the proteasome. Regulation by the ECS(SOCS2) complex acts as a negative feedback loop of growth hormone receptor signaling. Ubiquitination is not sufficient for GHR internalization.

It localises to the cell membrane. It is found in the secreted. Receptor for pituitary gland growth hormone (GH1) involved in regulating postnatal body growth. On ligand binding, couples to the JAK2/STAT5 pathway. In terms of biological role, the soluble form (GHBP) acts as a reservoir of growth hormone in plasma and may be a modulator/inhibitor of GH signaling. In Bos indicus (Zebu), this protein is Growth hormone receptor (GHR).